The primary structure comprises 275 residues: MAVIKCKPTSAGRRHVVKVVNSDLHKGKPFAGLLAKKAKSGGRNNTGRITVRHVGGGHKQHYRIVDFKRNKDGIPAKVERLEYDPNRTANIALVLYADGERRYILAAKGMQAGDQIQSGIDAEIKAGNALPLRNIPVGSVVHAVEMKPGKGAQIARSAGTYVQVVARDGAYATLRLRSGEMRKVPVDCRATLGEVGNAEHMLRQLGKAGAKRWRGVRPTVRGVAMNPVDHPHGGGEGRTSGGRHPVTPWGVPTKGYKTRSNKRTDKYIVRRRNKK.

A disordered region spans residues 223–275; sequence VAMNPVDHPHGGGEGRTSGGRHPVTPWGVPTKGYKTRSNKRTDKYIVRRRNKK.

This sequence belongs to the universal ribosomal protein uL2 family. Part of the 50S ribosomal subunit. Forms a bridge to the 30S subunit in the 70S ribosome.

Functionally, one of the primary rRNA binding proteins. Required for association of the 30S and 50S subunits to form the 70S ribosome, for tRNA binding and peptide bond formation. It has been suggested to have peptidyltransferase activity; this is somewhat controversial. Makes several contacts with the 16S rRNA in the 70S ribosome. The chain is Large ribosomal subunit protein uL2 from Shewanella loihica (strain ATCC BAA-1088 / PV-4).